The chain runs to 243 residues: Transcription factor TFIIS homolog (243 aa).

One can recognise a TFIIS central domain in the interval 77 to 201 (MRDIIQMMFF…SQQKVAEKTS (125 aa)). Residues 202 to 242 (QLYKCPNCKQRMCTYREVQTRALDEPSTIFCTCKKCGHEFI) form a TFIIS-type zinc finger. C206, C209, C234, and C237 together coordinate Zn(2+).

It belongs to the TFS-II family.

Putative initiation factor. Necessary for efficient transcription elongation past template-encoded arresting sites. This Ornithodoros (relapsing fever ticks) protein is Transcription factor TFIIS homolog.